Consider the following 189-residue polypeptide: UPF0398 protein lhv_1265 (189 aa).

The protein belongs to the UPF0398 family.

The sequence is that of UPF0398 protein lhv_1265 from Lactobacillus helveticus (strain DPC 4571).